A 113-amino-acid polypeptide reads, in one-letter code: Nucleoid-associated protein PMT_0025 (113 aa).

This sequence belongs to the YbaB/EbfC family. In terms of assembly, homodimer.

The protein localises to the cytoplasm. It localises to the nucleoid. Functionally, binds to DNA and alters its conformation. May be involved in regulation of gene expression, nucleoid organization and DNA protection. The sequence is that of Nucleoid-associated protein PMT_0025 from Prochlorococcus marinus (strain MIT 9313).